We begin with the raw amino-acid sequence, 1186 residues long: ATP-dependent helicase/deoxyribonuclease subunit B (1186 aa).

Residues 1–308 (MSVKFLLGRA…AHLEKEWGKN (308 aa)) enclose the UvrD-like helicase ATP-binding domain. Residue 8 to 15 (GRAGSGKT) participates in ATP binding. The UvrD-like helicase C-terminal domain occupies 288–620 (SLPRFKDNPA…LVGTADRSRY (333 aa)). [4Fe-4S] cluster is bound by residues C822, C1144, C1147, and C1153.

The protein belongs to the helicase family. AddB/RexB type 1 subfamily. Heterodimer of AddA and AddB. It depends on Mg(2+) as a cofactor. [4Fe-4S] cluster serves as cofactor.

The heterodimer acts as both an ATP-dependent DNA helicase and an ATP-dependent, dual-direction single-stranded exonuclease. Recognizes the chi site generating a DNA molecule suitable for the initiation of homologous recombination. The AddB subunit has 5' -&gt; 3' nuclease activity but not helicase activity. The protein is ATP-dependent helicase/deoxyribonuclease subunit B of Natranaerobius thermophilus (strain ATCC BAA-1301 / DSM 18059 / JW/NM-WN-LF).